Here is a 465-residue protein sequence, read N- to C-terminus: ATP-dependent protease ATPase subunit HslU (465 aa).

ATP-binding positions include Val18, 60–65 (GVGKTE), Asp277, Glu342, and Arg414.

It belongs to the ClpX chaperone family. HslU subfamily. In terms of assembly, a double ring-shaped homohexamer of HslV is capped on each side by a ring-shaped HslU homohexamer. The assembly of the HslU/HslV complex is dependent on binding of ATP.

The protein localises to the cytoplasm. Its function is as follows. ATPase subunit of a proteasome-like degradation complex; this subunit has chaperone activity. The binding of ATP and its subsequent hydrolysis by HslU are essential for unfolding of protein substrates subsequently hydrolyzed by HslV. HslU recognizes the N-terminal part of its protein substrates and unfolds these before they are guided to HslV for hydrolysis. The polypeptide is ATP-dependent protease ATPase subunit HslU (Caldicellulosiruptor saccharolyticus (strain ATCC 43494 / DSM 8903 / Tp8T 6331)).